A 211-amino-acid chain; its full sequence is N-(5'-phosphoribosyl)anthranilate isomerase (211 aa).

This sequence belongs to the TrpF family.

The enzyme catalyses N-(5-phospho-beta-D-ribosyl)anthranilate = 1-(2-carboxyphenylamino)-1-deoxy-D-ribulose 5-phosphate. It participates in amino-acid biosynthesis; L-tryptophan biosynthesis; L-tryptophan from chorismate: step 3/5. The sequence is that of N-(5'-phosphoribosyl)anthranilate isomerase from Zymomonas mobilis subsp. pomaceae (strain ATCC 29192 / DSM 22645 / JCM 10191 / CCUG 17912 / NBRC 13757 / NCIMB 11200 / NRRL B-4491 / Barker I).